A 311-amino-acid chain; its full sequence is Peptide methionine sulfoxide reductase MsrA/MsrB 2 (311 aa).

The peptide methionine sulfoxide reductase A stretch occupies residues 1–155; that stretch reads MHEIYLAGGC…PNGYCHINVN (155 aa). C10 is an active-site residue. The MsrB domain occupies 172-295; that stretch reads DEELKKTLSP…NSLSIRFIPK (124 aa). C284 functions as the Nucleophile in the catalytic mechanism.

The protein in the N-terminal section; belongs to the MsrA Met sulfoxide reductase family. This sequence in the C-terminal section; belongs to the MsrB Met sulfoxide reductase family.

The enzyme catalyses L-methionyl-[protein] + [thioredoxin]-disulfide + H2O = L-methionyl-(S)-S-oxide-[protein] + [thioredoxin]-dithiol. It catalyses the reaction [thioredoxin]-disulfide + L-methionine + H2O = L-methionine (S)-S-oxide + [thioredoxin]-dithiol. It carries out the reaction L-methionyl-[protein] + [thioredoxin]-disulfide + H2O = L-methionyl-(R)-S-oxide-[protein] + [thioredoxin]-dithiol. Functionally, has an important function as a repair enzyme for proteins that have been inactivated by oxidation. Catalyzes the reversible oxidation-reduction of methionine sulfoxide in proteins to methionine. This chain is Peptide methionine sulfoxide reductase MsrA/MsrB 2 (msrAB2), found in Streptococcus pneumoniae serotype 4 (strain ATCC BAA-334 / TIGR4).